Here is a 153-residue protein sequence, read N- to C-terminus: Endoribonuclease YbeY (153 aa).

H116, H120, and H126 together coordinate Zn(2+).

It belongs to the endoribonuclease YbeY family. Zn(2+) serves as cofactor.

Its subcellular location is the cytoplasm. Its function is as follows. Single strand-specific metallo-endoribonuclease involved in late-stage 70S ribosome quality control and in maturation of the 3' terminus of the 16S rRNA. In Clavibacter sepedonicus (Clavibacter michiganensis subsp. sepedonicus), this protein is Endoribonuclease YbeY.